Here is a 601-residue protein sequence, read N- to C-terminus: Deuterosome assembly protein 1 (601 aa).

3 coiled-coil regions span residues 14–59 (CEAE…NAQT), 86–197 (TQNY…KQQR), and 226–278 (IEKL…LQSR). 2 disordered regions span residues 115-135 (MKQNQSHRKEASNKDETPFEL) and 188-213 (QTQLNGKQQRPEDSSPETPRLVCESS). The segment covering 121–131 (HRKEASNKDET) has biased composition (basic and acidic residues). The interval 307–326 (DNRKRVESSYSPSTKEPERK) is disordered. The stretch at 340 to 397 (HEKELNKMRSQLYQEEDLCSEQERMRNEISELTQELHQKEVTIATIMKKAALLERQLK) forms a coiled coil. The residue at position 544 (Ser544) is a Phosphoserine. Residues 555 to 586 (AAQHFLMEEEKRAKELEKLLNTHIDELQRHTE) are a coiled coil.

It belongs to the CEP63 family. As to quaternary structure, interacts with CEP152; the interaction is mutually exclusive with CEP63.

The protein resides in the cytoplasm. Functionally, key structural component of the deuterosome, a structure that promotes de novo centriole amplification in multiciliated cells. Deuterosome-mediated centriole amplification occurs in terminally differentiated multiciliated cells and can generate more than 100 centrioles. Probably sufficient for the specification and formation of the deuterosome inner core. Interacts with CEP152 and recruits PLK4 to activate centriole biogenesis. This Rattus norvegicus (Rat) protein is Deuterosome assembly protein 1.